A 595-amino-acid polypeptide reads, in one-letter code: Estrogen receptor (595 aa).

The tract at residues 1–184 (MTMTLHTKAS…AMESVKETRY (184 aa)) is modulating(transactivation AF-1); mediates interaction with MACROD1. Ser10 is a glycosylation site (O-linked (GlcNAc) serine). Residues 35–47 (LERALSEVYVDSS) are required for interaction with NCOA1. An interaction with DDX5; self-association region spans residues 35 to 174 (LERALSEVYV…LSSSSEKGSM (140 aa)). Ser103 and Ser105 each carry phosphoserine; by CDK2. A Phosphoserine modification is found at Ser118. Positions 143–174 (DSGPPAFYRSNSDNRRQSGRERLSSSSEKGSM) are disordered. Residues 154-165 (SDNRRQSGRERL) show a composition bias toward basic and acidic residues. Residue Ser167 is modified to Phosphoserine; by CK2. 2 NR C4-type zinc fingers span residues 185–205 (CAVC…CEGC) and 221–245 (CPAT…LRKC). Positions 185 to 250 (CAVCNDYASG…RLRKCYEVGM (66 aa)) form a DNA-binding region, nuclear receptor. A mediates interaction with DNTTIP2 region spans residues 185-310 (CAVCNDYASG…TKKNSPALSL (126 aa)). Positions 251–310 (MKGGIRKDRRGGRMLKHKRQRDDLEGRNDMGPSGDMRATNLWPSPLVIKHTKKNSPALSL) are hinge. Asymmetric dimethylarginine; by PRMT1 is present on Arg260. The span at 260–269 (RGGRMLKHKR) shows a compositional bias: basic residues. Residues 260-285 (RGGRMLKHKRQRDDLEGRNDMGPSGD) are disordered. Residues 262 to 595 (GRMLKHKRQR…SEAESFPNTI (334 aa)) are interaction with AKAP13. The interval 264-595 (MLKHKRQRDD…SEAESFPNTI (332 aa)) is self-association. Positions 311–547 (TADQMVSALL…DLLLEMLDAH (237 aa)) constitute an NR LBD domain. Positions 311–595 (TADQMVSALL…SEAESFPNTI (285 aa)) are transactivation AF-2. 17beta-estradiol contacts are provided by Glu353 and Arg394. Cys447 carries the S-palmitoyl cysteine lipid modification. 17beta-estradiol is bound at residue His524. A Phosphotyrosine; by Tyr-kinases modification is found at Tyr537. The tract at residues 554-578 (SRMGVSPEEPSQSQLTTTNSTSSHS) is disordered. Over residues 564-578 (SQSQLTTTNSTSSHS) the composition is skewed to low complexity. Thr571 carries an O-linked (GlcNAc) threonine glycan.

Belongs to the nuclear hormone receptor family. NR3 subfamily. As to quaternary structure, binds DNA as a homodimer. Can form a heterodimer with ESR2. Interacts with coactivator NCOA5. Interacts with PELP1, the interaction is enhanced by 17-beta-estradiol; the interaction increases ESR1 transcriptional activity. Interacts with NCOA7; the interaction is ligand-inducible. Interacts with AKAP13, CUEDC2, HEXIM1, KDM5A, MAP1S, SMARD1, and UBE1C. Interacts with MUC1; the interaction is stimulated by 7 beta-estradiol (E2) and enhances ESR1-mediated transcription. Interacts with DNTTIP2, and UIMC1. Interacts with KMT2D/MLL2. Interacts with ATAD2; the interaction is enhanced by estradiol. Interacts with KIF18A and LDB1. Interacts with RLIM (via its C-terminus). Interacts with MACROD1. Interacts with SH2D4A and PLCG. Interacts with SH2D4A; the interaction blocks binding to PLCG and inhibits estrogen-induced cell proliferation. Interacts with DYNLL1. Interacts with CCDC62; the interaction requires estradiol and appears to enhance the transcription of target genes. Interacts with NR2C1; the interaction prevents homodimerization of ESR1 and suppresses its transcriptional activity and cell growth. Interacts with DNAAF4. Interacts with PRMT2. Interacts with RBFOX2. Interacts with EP300; the interaction is estrogen-dependent and enhanced by CITED1. Interacts with CITED1; the interaction is estrogen-dependent. Interacts with FAM120B, FOXL2, PHB2 and SLC30A9. Interacts with coactivators NCOA3 and NCOA6. Interacts with STK3/MST2 only in the presence of SAV1 and vice-versa. Binds to CSNK1D. Interacts with NCOA2; NCOA2 can interact with ESR1 AF-1 and AF-2 domains simultaneously and mediate their transcriptional synergy. Interacts with DDX5. Interacts with NCOA1; the interaction seems to require a self-association of N-terminal and C-terminal regions. Interacts with ZNF366, DDX17, NFKB1, RELA, SP1 and SP3. Interacts with NRIP1. Interacts with GPER1; the interaction occurs in an estrogen-dependent manner. Interacts with CLOCK and the interaction is stimulated by estrogen. Interacts with TRIP4 (ufmylated); estrogen dependent. Interacts with LMTK3; the interaction phosphorylates ESR1 (in vitro) and protects it against proteasomal degradation. Interacts with CCAR2 (via N-terminus) in a ligand-independent manner. Interacts with ZFHX3. Interacts with SFR1 in a ligand-dependent and -independent manner. Interacts with DCAF13, LATS1 and DCAF1; regulates ESR1 ubiquitination and ubiquitin-mediated proteasomal degradation. Interacts (via DNA-binding domain) with POU4F2 (C-terminus); this interaction increases the estrogen receptor ESR1 transcriptional activity in a DNA- and ligand 17-beta-estradiol-independent manner. Interacts with ESRRB isoform 1. Interacts with UBE3A and WBP2. Interacts with GTF2B. Interacts with RBM39. In the absence of hormonal ligand, interacts with TACC1. Interacts with PI3KR1 or PI3KR2 and PTK2/FAK1. Interacts with SRC. Interacts with BAG1; the interaction is promoted in the absence of estradiol (17-beta-estradiol/E2). Interacts with and ubiquitinated by STUB1; the interaction is promoted in the absence of estradiol (17-beta-estradiol/E2). Interacts with NEDD8. Ubiquitinated; regulated by LATS1 via DCAF1 it leads to ESR1 proteasomal degradation. Deubiquitinated by OTUB1. Ubiquitinated by STUB1/CHIP; in the CA1 hippocampal region following loss of endogenous circulating estradiol (17-beta-estradiol/E2). Ubiquitinated by UBR5, leading to its degradation: UBR5 specifically recognizes and binds ligand-bound ESR1 when it is not associated with coactivators (NCOAs). In presence of NCOAs, the UBR5-degron is not accessible, preventing its ubiquitination and degradation. In terms of processing, phosphorylated by cyclin A/CDK2 and CK1. Phosphorylation probably enhances transcriptional activity. Dephosphorylation at Ser-118 by PPP5C inhibits its transactivation activity. Phosphorylated by LMTK3 (in vitro). Post-translationally, palmitoylated at Cys-447 by ZDHHC7 and ZDHHC21. Palmitoylation is required for plasma membrane targeting and for rapid intracellular signaling via ERK and AKT kinases and cAMP generation, but not for signaling mediated by the nuclear hormone receptor. Dimethylated by PRMT1 at Arg-260. The methylation may favor cytoplasmic localization. Demethylated by JMJD6 at Arg-260.

It localises to the nucleus. The protein resides in the cytoplasm. Its subcellular location is the golgi apparatus. It is found in the cell membrane. Functionally, nuclear hormone receptor. The steroid hormones and their receptors are involved in the regulation of eukaryotic gene expression and affect cellular proliferation and differentiation in target tissues. Ligand-dependent nuclear transactivation involves either direct homodimer binding to a palindromic estrogen response element (ERE) sequence or association with other DNA-binding transcription factors, such as AP-1/c-Jun, c-Fos, ATF-2, Sp1 and Sp3, to mediate ERE-independent signaling. Ligand binding induces a conformational change allowing subsequent or combinatorial association with multiprotein coactivator complexes through LXXLL motifs of their respective components. Mutual transrepression occurs between the estrogen receptor (ER) and NF-kappa-B in a cell-type specific manner. Decreases NF-kappa-B DNA-binding activity and inhibits NF-kappa-B-mediated transcription from the IL6 promoter and displace RELA/p65 and associated coregulators from the promoter. Recruited to the NF-kappa-B response element of the CCL2 and IL8 promoters and can displace CREBBP. Present with NF-kappa-B components RELA/p65 and NFKB1/p50 on ERE sequences. Can also act synergistically with NF-kappa-B to activate transcription involving respective recruitment adjacent response elements; the function involves CREBBP. Can activate the transcriptional activity of TFF1. Also mediates membrane-initiated estrogen signaling involving various kinase cascades. Essential for MTA1-mediated transcriptional regulation of BRCA1 and BCAS3. Maintains neuronal survival in response to ischemic reperfusion injury when in the presence of circulating estradiol (17-beta-estradiol/E2). The sequence is that of Estrogen receptor (ESR1) from Mesocricetus auratus (Golden hamster).